The following is a 448-amino-acid chain: Asparagine--tRNA ligase (448 aa).

Belongs to the class-II aminoacyl-tRNA synthetase family. Homodimer.

The protein resides in the cytoplasm. It catalyses the reaction tRNA(Asn) + L-asparagine + ATP = L-asparaginyl-tRNA(Asn) + AMP + diphosphate + H(+). The polypeptide is Asparagine--tRNA ligase (Streptococcus mutans serotype c (strain ATCC 700610 / UA159)).